Consider the following 502-residue polypeptide: UDP-N-acetylmuramoylalanine--D-glutamate ligase (502 aa).

129-135 (GTNGKTT) contributes to the ATP binding site. A disordered region spans residues 288-307 (APDETTSRRRKRDGAHTPDI).

This sequence belongs to the MurCDEF family.

It is found in the cytoplasm. The catalysed reaction is UDP-N-acetyl-alpha-D-muramoyl-L-alanine + D-glutamate + ATP = UDP-N-acetyl-alpha-D-muramoyl-L-alanyl-D-glutamate + ADP + phosphate + H(+). Its pathway is cell wall biogenesis; peptidoglycan biosynthesis. Functionally, cell wall formation. Catalyzes the addition of glutamate to the nucleotide precursor UDP-N-acetylmuramoyl-L-alanine (UMA). The sequence is that of UDP-N-acetylmuramoylalanine--D-glutamate ligase from Burkholderia ambifaria (strain ATCC BAA-244 / DSM 16087 / CCUG 44356 / LMG 19182 / AMMD) (Burkholderia cepacia (strain AMMD)).